The chain runs to 66 residues: Large ribosomal subunit protein bL32 (66 aa).

The segment at 1-20 is disordered; that stretch reads MAVPKRRKSKSKVRTKRAHH.

Belongs to the bacterial ribosomal protein bL32 family.

This chain is Large ribosomal subunit protein bL32, found in Leptospira borgpetersenii serovar Hardjo-bovis (strain JB197).